Consider the following 315-residue polypeptide: MAAGVPCALVTSCSSAFSGDQLVQHILGTEDLIVELTSNDAVRFYPWTIDNKYYSADINLCVVPNKFLVTAEIAESVQAFVVYFDGTQKSGLDSVSSWLPLAEAWLPEVMILVCDRVSEDGINRQKAQEWCIKHGFELVELSPEELPEEDDDFPESTGVKRIVQALNANVWSNVVMKNDRNQGFSLLNSLTGTNHSIGSADPCHPEQPHLPAADRTESLSDHRGGASNTTDAQVDSIVDPMLDLDIQELASLTTGGGDVENFERLFSKLKEMKDKAATLPHEQRKVHAEKVAKAFWMAIGGDRDEIEGLSSDEEH.

Residues 197–233 are disordered; sequence IGSADPCHPEQPHLPAADRTESLSDHRGGASNTTDAQ. Positions 203–224 are enriched in basic and acidic residues; it reads CHPEQPHLPAADRTESLSDHRG. A phosphoserine mark is found at Ser310 and Ser311.

As to quaternary structure, associated with AP-1 and AP-2 complexes.

It localises to the cytoplasm. The protein localises to the cytosol. Its function is as follows. May be involved in endocytic recycling of growth factor receptors such as EGFR. The sequence is that of Alpha- and gamma-adaptin-binding protein p34 (AAGAB) from Pongo abelii (Sumatran orangutan).